The sequence spans 498 residues: Glycerol kinase (498 aa).

Residue Thr12 participates in ADP binding. ATP is bound by residues Thr12, Thr13, and Ser14. Thr12 provides a ligand contact to sn-glycerol 3-phosphate. Position 16 (Arg16) interacts with ADP. Sn-glycerol 3-phosphate is bound by residues Arg82, Glu83, and Tyr134. Residues Arg82, Glu83, and Tyr134 each contribute to the glycerol site. His230 is modified (phosphohistidine; by HPr). Asp244 contacts sn-glycerol 3-phosphate. Glycerol contacts are provided by Asp244 and Gln245. ADP is bound by residues Thr266 and Gly309. Residues Thr266, Gly309, Gln313, and Gly410 each coordinate ATP. ADP-binding residues include Gly410 and Asn414.

Belongs to the FGGY kinase family. In terms of assembly, homotetramer and homodimer (in equilibrium). The phosphoenolpyruvate-dependent sugar phosphotransferase system (PTS), including enzyme I, and histidine-containing protein (HPr) are required for the phosphorylation, which leads to the activation of the enzyme.

It catalyses the reaction glycerol + ATP = sn-glycerol 3-phosphate + ADP + H(+). The protein operates within polyol metabolism; glycerol degradation via glycerol kinase pathway; sn-glycerol 3-phosphate from glycerol: step 1/1. With respect to regulation, activated by phosphorylation and inhibited by fructose 1,6-bisphosphate (FBP). Key enzyme in the regulation of glycerol uptake and metabolism. Catalyzes the phosphorylation of glycerol to yield sn-glycerol 3-phosphate. In Staphylococcus aureus (strain MRSA252), this protein is Glycerol kinase.